A 593-amino-acid polypeptide reads, in one-letter code: Tyrosine-protein phosphatase non-receptor type 11 (593 aa).

Thr2 is modified (N-acetylthreonine). SH2 domains lie at Trp6 to Leu102 and Trp112 to Leu216. A phosphotyrosine mark is found at Tyr62 and Tyr66. Positions Phe247–Ala517 constitute a Tyrosine-protein phosphatase domain. Residues Asp425, Cys459 to Arg465, and Gln506 each bind substrate. Cys459 acts as the Phosphocysteine intermediate in catalysis. Phosphotyrosine; by PDGFR occurs at positions 542 and 580.

This sequence belongs to the protein-tyrosine phosphatase family. Non-receptor class 2 subfamily. In terms of assembly, interacts with phosphorylated SIT1, LIME1, BCAR3 and MZPL1. Interacts with FCRL4, FCRL6, ANKHD1, SHB, INPP5D/SHIP1 and CD84. Interacts with MILR1 (tyrosine-phosphorylated). Interacts with FLT1 (tyrosine-phosphorylated), FLT3 (tyrosine-phosphorylated), FLT4 (tyrosine-phosphorylated), KIT and GRB2. Interacts with PTPNS1. Interacts with KIR2DL1; the interaction is enhanced by ARRB2. Interacts (via SH2 domain) with TEK/TIE2 (tyrosine phosphorylated). Interacts with GAB2. Interacts with TERT; the interaction retains TERT in the nucleus. Interacts with PECAM1 and FER. Interacts with EPHA2 (activated); participates in PTK2/FAK1 dephosphorylation in EPHA2 downstream signaling. Interacts with PDGFRA (tyrosine phosphorylated). Interacts with PDGFRB (tyrosine phosphorylated); this interaction increases the PTPN11 phosphatase activity. Interacts with ROS1; this mediates PTPN11 phosphorylation. Interacts with CEACAM1 (via cytoplasmic domain); this interaction depends on the monomer/dimer equilibrium and is phosphorylation-dependent. Interacts with MPIG6B (via ITIM motif). Interacts with SIGLEC10. Interacts with CLEC12B (via ITIM motif); this interaction triggers dephosphorylation and activation of PTPN11. Interacts (via SH2 domains) with NEDD9/CAS-L; the interaction is enhanced when NEDD9/CAS-L is tyrosine phosphorylated. In terms of processing, phosphorylated on Tyr-542 and Tyr-580 upon receptor protein tyrosine kinase activation; which creates a binding site for GRB2 and other SH2-containing proteins. Phosphorylated upon activation of the receptor-type kinase FLT3. Phosphorylated upon activation of the receptor-type kinase PDGFRA. Phosphorylated by activated PDGFRB. In terms of tissue distribution, expressed in brain, muscle and lung.

The protein resides in the cytoplasm. The enzyme catalyses O-phospho-L-tyrosyl-[protein] + H2O = L-tyrosyl-[protein] + phosphate. With respect to regulation, inhibited by orthovanadate, molybdate and spermidine. In terms of biological role, acts downstream of various receptor and cytoplasmic protein tyrosine kinases to participate in the signal transduction from the cell surface to the nucleus. Positively regulates MAPK signal transduction pathway. Dephosphorylates GAB1, ARHGAP35 and EGFR. Dephosphorylates ROCK2 at 'Tyr-722' resulting in stimulation of its RhoA binding activity. Dephosphorylates CDC73. Dephosphorylates SOX9 on tyrosine residues, leading to inactivate SOX9 and promote ossification. Dephosphorylates tyrosine-phosphorylated NEDD9/CAS-L. The sequence is that of Tyrosine-protein phosphatase non-receptor type 11 (Ptpn11) from Rattus norvegicus (Rat).